The primary structure comprises 212 residues: Fe/S biogenesis protein NfuA (212 aa).

[4Fe-4S] cluster is bound by residues C169 and C172.

The protein belongs to the NfuA family. Homodimer. It depends on [4Fe-4S] cluster as a cofactor.

Its function is as follows. Involved in iron-sulfur cluster biogenesis. Binds a 4Fe-4S cluster, can transfer this cluster to apoproteins, and thereby intervenes in the maturation of Fe/S proteins. Could also act as a scaffold/chaperone for damaged Fe/S proteins. The protein is Fe/S biogenesis protein NfuA of Acinetobacter baumannii (strain SDF).